We begin with the raw amino-acid sequence, 215 residues long: Probable transaldolase (215 aa).

Lysine 83 (schiff-base intermediate with substrate) is an active-site residue.

This sequence belongs to the transaldolase family. Type 3B subfamily.

It is found in the cytoplasm. It catalyses the reaction D-sedoheptulose 7-phosphate + D-glyceraldehyde 3-phosphate = D-erythrose 4-phosphate + beta-D-fructose 6-phosphate. Its pathway is carbohydrate degradation; pentose phosphate pathway; D-glyceraldehyde 3-phosphate and beta-D-fructose 6-phosphate from D-ribose 5-phosphate and D-xylulose 5-phosphate (non-oxidative stage): step 2/3. Its function is as follows. Transaldolase is important for the balance of metabolites in the pentose-phosphate pathway. This chain is Probable transaldolase, found in Clostridium perfringens (strain ATCC 13124 / DSM 756 / JCM 1290 / NCIMB 6125 / NCTC 8237 / Type A).